The primary structure comprises 404 residues: G1/S-specific cyclin-E2 (404 aa).

A disordered region spans residues 1–45; it reads MSRRSSRLQAKQQPQASQTDSPQEAQIIQAKKRKTAQDVKKRKEE. Residues 7–26 are compositionally biased toward polar residues; that stretch reads RLQAKQQPQASQTDSPQEAQ. The residue at position 21 (Ser21) is a Phosphoserine. Over residues 35 to 45 the composition is skewed to basic and acidic residues; it reads TAQDVKKRKEE. Lys348 is modified (N6-lactoyllysine). Position 383 is a phosphoserine (Ser383). A Phosphothreonine modification is found at Thr392.

This sequence belongs to the cyclin family. Cyclin E subfamily. As to quaternary structure, interacts with the CDK2 (in vivo) and CDK3 (in vitro) protein kinases to form a serine/threonine kinase holoenzyme complex. The cyclin subunit imparts substrate specificity to the complex. Phosphorylation by CDK2 triggers its release from CDK2 and degradation via the ubiquitin proteasome pathway. In terms of processing, lactylated at Lys-348. Delactylated by SIRT3.

The protein localises to the nucleus. Essential for the control of the cell cycle at the late G1 and early S phase. This is G1/S-specific cyclin-E2 (CCNE2) from Bos taurus (Bovine).